We begin with the raw amino-acid sequence, 88 residues long: Small ribosomal subunit protein uS15 (88 aa).

This sequence belongs to the universal ribosomal protein uS15 family. As to quaternary structure, part of the 30S ribosomal subunit. Forms a bridge to the 50S subunit in the 70S ribosome, contacting the 23S rRNA.

Functionally, one of the primary rRNA binding proteins, it binds directly to 16S rRNA where it helps nucleate assembly of the platform of the 30S subunit by binding and bridging several RNA helices of the 16S rRNA. Its function is as follows. Forms an intersubunit bridge (bridge B4) with the 23S rRNA of the 50S subunit in the ribosome. This Mesomycoplasma hyopneumoniae (strain 232) (Mycoplasma hyopneumoniae) protein is Small ribosomal subunit protein uS15.